Consider the following 1281-residue polypeptide: Dynactin subunit 1 (1281 aa).

A disordered region spans residues 1-26; that stretch reads MAQSRRHMSSRTPSGSRMSTEASARP. The span at 10-22 shows a compositional bias: polar residues; it reads SRTPSGSRMSTEA. Residues 48 to 90 enclose the CAP-Gly domain; the sequence is GATLFATGKWVGVILDEAKGKNDGTVQGRKYFTCDEGHGIFVR. The segment at 100–221 is disordered; sequence GADTTSPETP…SPSKEEEGLR (122 aa). A compositionally biased stretch (polar residues) spans 102 to 114; sequence DTTSPETPDSSAS. A phosphothreonine mark is found at Thr108, Thr145, Thr146, and Thr147. The span at 129–152 shows a compositional bias: basic residues; sequence SKLRGLKPKKAPTARKTTTRRPKP. Positions 161–205 are enriched in low complexity; it reads AGPSSSLGPSGSASAGELSSSEPSTPAQTPLAAPIIPTPALTSPG. Ser179 is subject to Phosphoserine; by PLK1. The residue at position 212 (Ser212) is a Phosphoserine; by CDK1. 3 coiled-coil regions span residues 214-547, 943-1049, and 1185-1214; these read SKEE…RQQQ, LKLE…EGLR, and SAQL…KETV. The tract at residues 911–1281 is interaction with HPS6; the sequence is EYDAERPPSK…LHQLHSRLIS (371 aa).

The protein belongs to the dynactin 150 kDa subunit family. As to quaternary structure, monomer and homodimer. Subunit of dynactin, a multiprotein complex part of a tripartite complex with dynein and a adapter, such as BICDL1, BICD2 or HOOK3. The dynactin complex is built around ACTR1A/ACTB filament and consists of an actin-related filament composed of a shoulder domain, a pointed end and a barbed end. Its length is defined by its flexible shoulder domain. The soulder is composed of 2 DCTN1 subunits, 4 DCTN2 and 2 DCTN3. DCTN1/p150(glued) binds directly to microtubules and to cytoplasmic dynein. The 4 DCNT2 (via N-terminus) bind the ACTR1A filament and act as molecular rulers to determine the length. The pointed end is important for binding dynein-dynactin cargo adapters. Consists of 4 subunits: ACTR10, DCNT4, DCTN5 and DCTN6. The barbed end is composed of a CAPZA1:CAPZB heterodimers, which binds ACTR1A/ACTB filament and dynactin and stabilizes dynactin. Interacts with the C-terminus of MAPRE1, MAPRE2 and MAPRE3. Interacts with FBXL5. Interacts with ECPAS. Interacts with CLIP1. Interacts with CLN3 and DYNAP. Interacts with MISP; this interaction regulates its distribution at the cell cortex. Interacts with CEP131. Interacts with CEP126. Interacts with dynein intermediate chain and dynein heavy chain. Interacts with PLK1 (via POLO-box domain). Interacts with TBCB and PARD6A. Binds preferentially to tyrosinated microtubules than to detyrosinated microtubules. Interacts with KIF3A. Interacts with HPS6. Interacts with SNX6. Interacts with BICD2. Interacts with DST (isoform 1). Identified in a complex with MREG and RILP. Interacts with BCCIP. Interacts with DCDC1. Interacts with AKNA. Interacts with DYNC1I2. Interacts with RUFY3 and RUFY4. Ubiquitinated by a SCF complex containing FBXL5, leading to its degradation by the proteasome. In terms of processing, phosphorylation by SLK at Thr-145, Thr-146 and Thr-147 targets DCTN1 to the centrosome. It is uncertain if SLK phosphorylates all three threonines or one or two of them. PLK1-mediated phosphorylation at Ser-179 is essential for its localization in the nuclear envelope and promotes its dissociation from microtubules during early mitosis and positively regulates nuclear envelope breakdown during prophase.

Its subcellular location is the cytoplasm. It localises to the cytoskeleton. The protein localises to the microtubule organizing center. The protein resides in the centrosome. It is found in the centriole. Its subcellular location is the spindle. It localises to the nucleus envelope. The protein localises to the cell cortex. Part of the dynactin complex that activates the molecular motor dynein for ultra-processive transport along microtubules. Plays a key role in dynein-mediated retrograde transport of vesicles and organelles along microtubules by recruiting and tethering dynein to microtubules. Binds to both dynein and microtubules providing a link between specific cargos, microtubules and dynein. Essential for targeting dynein to microtubule plus ends, recruiting dynein to membranous cargos and enhancing dynein processivity (the ability to move along a microtubule for a long distance without falling off the track). Can also act as a brake to slow the dynein motor during motility along the microtubule. Can regulate microtubule stability by promoting microtubule formation, nucleation and polymerization and by inhibiting microtubule catastrophe in neurons. Inhibits microtubule catastrophe by binding both to microtubules and to tubulin, leading to enhanced microtubule stability along the axon. Plays a role in metaphase spindle orientation. Plays a role in centriole cohesion and subdistal appendage organization and function. Its recruitment to the centriole in a KIF3A-dependent manner is essential for the maintenance of centriole cohesion and the formation of subdistal appendage. Also required for microtubule anchoring at the mother centriole. Plays a role in primary cilia formation. This chain is Dynactin subunit 1 (Dctn1), found in Mus musculus (Mouse).